The following is a 158-amino-acid chain: NAD(P)H-quinone oxidoreductase subunit J, chloroplastic (158 aa).

The protein belongs to the complex I 30 kDa subunit family. In terms of assembly, NDH is composed of at least 16 different subunits, 5 of which are encoded in the nucleus.

It is found in the plastid. It localises to the chloroplast thylakoid membrane. The enzyme catalyses a plastoquinone + NADH + (n+1) H(+)(in) = a plastoquinol + NAD(+) + n H(+)(out). It catalyses the reaction a plastoquinone + NADPH + (n+1) H(+)(in) = a plastoquinol + NADP(+) + n H(+)(out). Its function is as follows. NDH shuttles electrons from NAD(P)H:plastoquinone, via FMN and iron-sulfur (Fe-S) centers, to quinones in the photosynthetic chain and possibly in a chloroplast respiratory chain. The immediate electron acceptor for the enzyme in this species is believed to be plastoquinone. Couples the redox reaction to proton translocation, and thus conserves the redox energy in a proton gradient. The polypeptide is NAD(P)H-quinone oxidoreductase subunit J, chloroplastic (Coffea arabica (Arabian coffee)).